An 874-amino-acid polypeptide reads, in one-letter code: Leucine--tRNA ligase (874 aa).

The short motif at 43-53 (PYPSGRIHIGH) is the 'HIGH' region element. The short motif at 630–634 (KMSKS) is the 'KMSKS' region element. Residue lysine 633 coordinates ATP.

This sequence belongs to the class-I aminoacyl-tRNA synthetase family.

Its subcellular location is the cytoplasm. The catalysed reaction is tRNA(Leu) + L-leucine + ATP = L-leucyl-tRNA(Leu) + AMP + diphosphate. This chain is Leucine--tRNA ligase, found in Bradyrhizobium sp. (strain ORS 278).